A 493-amino-acid polypeptide reads, in one-letter code: Ribose import ATP-binding protein RbsA (493 aa).

ABC transporter domains follow at residues 5-241 (LKIS…VGRR) and 252-491 (EKGE…AAAI). 37-44 (GENGAGKS) contacts ATP.

It belongs to the ABC transporter superfamily. Ribose importer (TC 3.A.1.2.1) family. In terms of assembly, the complex is composed of an ATP-binding protein (RbsA), two transmembrane proteins (RbsC) and a solute-binding protein (RbsB).

Its subcellular location is the cell inner membrane. The enzyme catalyses D-ribose(out) + ATP + H2O = D-ribose(in) + ADP + phosphate + H(+). Functionally, part of the ABC transporter complex RbsABC involved in ribose import. Responsible for energy coupling to the transport system. This Haemophilus influenzae (strain ATCC 51907 / DSM 11121 / KW20 / Rd) protein is Ribose import ATP-binding protein RbsA.